The sequence spans 620 residues: Kelch-like protein 8 (620 aa).

The segment covering 1-10 (MASDSMSSKQ) has biased composition (polar residues). The disordered stretch occupies residues 1–35 (MASDSMSSKQARNHITKGKRQQQHQQIKNRSSISD). A2 is modified (N-acetylalanine). Basic residues predominate over residues 11 to 22 (ARNHITKGKRQQ). Residues 23–34 (QHQQIKNRSSIS) show a composition bias toward polar residues. In terms of domain architecture, BTB spans 67–134 (CDVTLKVGSK…VYSSRLTLTV (68 aa)). The 102-residue stretch at 169–270 (CLAVRAFAES…LPVDFLMGVV (102 aa)) folds into the BACK domain. Kelch repeat units lie at residues 319 to 366 (VLFC…SVEG), 367 to 413 (KVYA…SLGG), 415 to 460 (IYAI…ALVN), 462 to 507 (VYAV…KLHG), 508 to 554 (CLYV…TVMG), and 556 to 601 (IFAV…VCSC).

As to quaternary structure, component of the BCR(KLHL8) E3 ubiquitin ligase complex, at least composed of CUL3, KLHL8 and RBX1. Interacts with RAPSN.

Its pathway is protein modification; protein ubiquitination. Functionally, substrate-specific adapter of a BCR (BTB-CUL3-RBX1) E3 ubiquitin ligase complex required for The BCR(KLHL8) ubiquitin ligase complex mediates ubiquitination and degradation of RAPSN. This Homo sapiens (Human) protein is Kelch-like protein 8 (KLHL8).